Reading from the N-terminus, the 138-residue chain is Large ribosomal subunit protein uL11c (138 aa).

Belongs to the universal ribosomal protein uL11 family. Part of the ribosomal stalk of the 50S ribosomal subunit. Interacts with L10 and the large rRNA to form the base of the stalk. L10 forms an elongated spine to which L12 dimers bind in a sequential fashion forming a multimeric L10(L12)X complex.

The protein localises to the plastid. It localises to the chloroplast. In terms of biological role, forms part of the ribosomal stalk which helps the ribosome interact with GTP-bound translation factors. The protein is Large ribosomal subunit protein uL11c of Cyanidioschyzon merolae (strain NIES-3377 / 10D) (Unicellular red alga).